A 128-amino-acid chain; its full sequence is MGKQATPRALPENEAKAVARMLRVSPQKLNLVAQMIRGKKVDTALAELQFSRKRISTEVKKCLESAIANAENNHDLDVDDLVVSQAFVGKALVLKRFHARARGRGARILKPFSNLTIVVREVRQAEAA.

It belongs to the universal ribosomal protein uL22 family. Part of the 50S ribosomal subunit.

In terms of biological role, this protein binds specifically to 23S rRNA; its binding is stimulated by other ribosomal proteins, e.g. L4, L17, and L20. It is important during the early stages of 50S assembly. It makes multiple contacts with different domains of the 23S rRNA in the assembled 50S subunit and ribosome. Its function is as follows. The globular domain of the protein is located near the polypeptide exit tunnel on the outside of the subunit, while an extended beta-hairpin is found that lines the wall of the exit tunnel in the center of the 70S ribosome. The sequence is that of Large ribosomal subunit protein uL22 from Methylobacterium radiotolerans (strain ATCC 27329 / DSM 1819 / JCM 2831 / NBRC 15690 / NCIMB 10815 / 0-1).